Here is a 589-residue protein sequence, read N- to C-terminus: MSQRVRRNGSPTPAGSLGGGAVATAGGPGSRLQPMRATVPFQLKQQQQQQHGSPTRSGGGGGGNNNGGCCGGASGPAGGGGGGGPRTASRSTSPTRGGGNAAARTSPTVATQTGASATSTRGTSPTRSAAPGARGSPPRPPPPPPLLGTVSSPSSSPTHLWTGEVSAAPPPARVRHRRRSPEQSRSSPEKRSPSAPVCKAGDKTRQPSSSPSSIIRRTSSLDTLAAPYLAGHWPRDSHGQAAPCMRDKATQTESAWAEEYSEKKKGSHKRSASWGSTDQLKEIAKLRQQLQRSKHSSRHHRDKERQSPFHGNHAAINQCQAPVPKSALIPVIPITKSTGSRFRNSVEGLNQEIEIIIKETGEKEEQLIPQDIPDGHRAPPPLVQRSSSTRSIDTQTPGGADRGSNNSSRSQSVSPTSFLTISNEGSEESPCSADDLLVDPRDKENGNNSPLPKYATSPKPNNSYMFKREPPEGCERVKVFEECSPKQLHEIPAFYCPDKNKVNFIPKSGSAFCLVSILKPLLPTPDLTLKGSGHSLTVTTGMTTTLLQPIAVASLSTNTEQDRVSRGTSTVMPSASLLPPPEPIEEAEG.

The tract at residues 1–310 (MSQRVRRNGS…RDKERQSPFH (310 aa)) is disordered. Serine 10 bears the Phosphoserine mark. Over residues 16–29 (SLGGGAVATAGGPG) the composition is skewed to gly residues. Over residues 45-56 (QQQQQQHGSPTR) the composition is skewed to low complexity. The segment covering 57 to 85 (SGGGGGGNNNGGCCGGASGPAGGGGGGGP) has biased composition (gly residues). Position 106 is a phosphoserine (serine 106). Positions 108–136 (TVATQTGASATSTRGTSPTRSAAPGARGS) are enriched in low complexity. A compositionally biased stretch (pro residues) spans 137-146 (PPRPPPPPPL). Low complexity-rich tracts occupy residues 147-158 (LGTVSSPSSSPT) and 207-220 (PSSSPSSIIRRTSS). Phosphoserine is present on residues serine 210, serine 219, serine 220, and serine 273. A compositionally biased stretch (basic residues) spans 292-302 (RSKHSSRHHRD). 2 positions are modified to phosphoserine: serine 345 and serine 391. 2 disordered regions span residues 370 to 464 (QDIP…NNSY) and 556 to 589 (STNTEQDRVSRGTSTVMPSASLLPPPEPIEEAEG). Positions 384–397 (QRSSSTRSIDTQTP) are enriched in polar residues. The span at 404–417 (SNNSSRSQSVSPTS) shows a compositional bias: low complexity. Phosphoserine occurs at positions 449 and 457.

The protein is Protein FAM117B (FAM117B) of Homo sapiens (Human).